Here is a 393-residue protein sequence, read N- to C-terminus: DNA-directed RNA polymerase subunit Rpo1C (393 aa).

The protein belongs to the RNA polymerase beta' chain family. Part of the RNA polymerase complex.

It is found in the cytoplasm. It carries out the reaction RNA(n) + a ribonucleoside 5'-triphosphate = RNA(n+1) + diphosphate. Its function is as follows. DNA-dependent RNA polymerase (RNAP) catalyzes the transcription of DNA into RNA using the four ribonucleoside triphosphates as substrates. Forms part of the jaw domain. The chain is DNA-directed RNA polymerase subunit Rpo1C from Halococcus morrhuae (Micrococcus morrhuae).